Consider the following 622-residue polypeptide: Elongation factor 4 (622 aa).

One can recognise a tr-type G domain in the interval 17–201; the sequence is ALIRNFCIIA…KVVAEVPAPV (185 aa). GTP-binding positions include 29–34 and 148–151; these read DHGKST and NKID.

The protein belongs to the TRAFAC class translation factor GTPase superfamily. Classic translation factor GTPase family. LepA subfamily.

The protein localises to the cell membrane. The enzyme catalyses GTP + H2O = GDP + phosphate + H(+). In terms of biological role, required for accurate and efficient protein synthesis under certain stress conditions. May act as a fidelity factor of the translation reaction, by catalyzing a one-codon backward translocation of tRNAs on improperly translocated ribosomes. Back-translocation proceeds from a post-translocation (POST) complex to a pre-translocation (PRE) complex, thus giving elongation factor G a second chance to translocate the tRNAs correctly. Binds to ribosomes in a GTP-dependent manner. This is Elongation factor 4 from Streptomyces coelicolor (strain ATCC BAA-471 / A3(2) / M145).